A 95-amino-acid chain; its full sequence is Small ubiquitin-related modifier 4 (95 aa).

One can recognise a Ubiquitin-like domain in the interval 17–95; sequence HINLKVAGQD…VFQQPTGGVY (79 aa). Gly93 participates in a covalent cross-link: Glycyl lysine isopeptide (Gly-Lys) (interchain with K-? in acceptor proteins). The propeptide occupies 94 to 95; the sequence is VY.

This sequence belongs to the ubiquitin family. SUMO subfamily. In terms of assembly, interacts with SAE2. Covalently attached to a number of proteins. In terms of processing, in contrast to SUMO1, SUMO2 and SUMO3, seems to be insensitive to sentrin-specific proteases due to the presence of Pro-90. This may impair processing to mature form and conjugation to substrates. In terms of tissue distribution, expressed mainly in adult and embryonic kidney. Expressed at various levels in immune tissues, with the highest expression in the lymph node and spleen.

Ubiquitin-like protein which can be covalently attached to target lysines as a monomer. Does not seem to be involved in protein degradation and may modulate protein subcellular localization, stability or activity. Upon oxidative stress, conjugates to various anti-oxidant enzymes, chaperones, and stress defense proteins. May also conjugate to NFKBIA, TFAP2A and FOS, negatively regulating their transcriptional activity, and to NR3C1, positively regulating its transcriptional activity. Covalent attachment to its substrates requires prior activation by the E1 complex SAE1-SAE2 and linkage to the E2 enzyme UBE2I. The polypeptide is Small ubiquitin-related modifier 4 (SUMO4) (Homo sapiens (Human)).